The following is a 305-amino-acid chain: UDP-3-O-acyl-N-acetylglucosamine deacetylase (305 aa).

The Zn(2+) site is built by His79, His238, and Asp242. His265 functions as the Proton donor in the catalytic mechanism.

It belongs to the LpxC family. The cofactor is Zn(2+).

It catalyses the reaction a UDP-3-O-[(3R)-3-hydroxyacyl]-N-acetyl-alpha-D-glucosamine + H2O = a UDP-3-O-[(3R)-3-hydroxyacyl]-alpha-D-glucosamine + acetate. It functions in the pathway glycolipid biosynthesis; lipid IV(A) biosynthesis; lipid IV(A) from (3R)-3-hydroxytetradecanoyl-[acyl-carrier-protein] and UDP-N-acetyl-alpha-D-glucosamine: step 2/6. Its function is as follows. Catalyzes the hydrolysis of UDP-3-O-myristoyl-N-acetylglucosamine to form UDP-3-O-myristoylglucosamine and acetate, the committed step in lipid A biosynthesis. In Haemophilus influenzae (strain PittGG), this protein is UDP-3-O-acyl-N-acetylglucosamine deacetylase.